The sequence spans 209 residues: Large ribosomal subunit protein bL9 (209 aa).

Residues 181–209 (EASEEGQELAAQREATEDAGADESEETEA) are disordered. Acidic residues predominate over residues 197 to 209 (EDAGADESEETEA).

Belongs to the bacterial ribosomal protein bL9 family.

In terms of biological role, binds to the 23S rRNA. This chain is Large ribosomal subunit protein bL9, found in Maricaulis maris (strain MCS10) (Caulobacter maris).